The primary structure comprises 204 residues: Guanylate kinase (204 aa).

The Guanylate kinase-like domain maps to 5–184 (GLLLVLSGPS…AVNHIKAIVD (180 aa)). 12-19 (GPSGVGKG) lines the ATP pocket.

Belongs to the guanylate kinase family.

The protein resides in the cytoplasm. The enzyme catalyses GMP + ATP = GDP + ADP. Functionally, essential for recycling GMP and indirectly, cGMP. The protein is Guanylate kinase of Lactobacillus delbrueckii subsp. bulgaricus (strain ATCC 11842 / DSM 20081 / BCRC 10696 / JCM 1002 / NBRC 13953 / NCIMB 11778 / NCTC 12712 / WDCM 00102 / Lb 14).